Consider the following 335-residue polypeptide: Stearoyl-CoA desaturase 5 (335 aa).

The Cytoplasmic portion of the chain corresponds to 1–54 (MPGPAVDAEKVPFRSAKEEIRAGVGVEGSEGGGGGGGRERPGARGHRQDIVWRN). Residues 24–44 (VGVEGSEGGGGGGGRERPGAR) are disordered. Gly residues predominate over residues 25 to 36 (GVEGSEGGGGGG). N54 serves as a coordination point for substrate. The chain crosses the membrane as a helical span at residues 55–75 (VFLMSLLHLAAVYSLVLIPKA). Residues 76-77 (QP) lie on the Lumenal side of the membrane. The helical transmembrane segment at 78-98 (LTLLWAYFCFLLTALGVTAGA) threads the bilayer. Residues H99 and H104 each contribute to the Fe cation site. Residues 99 to 104 (HRLWSH) carry the Histidine box-1 motif. Residues 99-198 (HRLWSHRSYK…VVRFQRKYYK (100 aa)) are Cytoplasmic-facing. Residues N127, R134, and D135 each coordinate substrate. Residues H136, H139, and H140 each coordinate Fe cation. The Histidine box-2 signature appears at 136–140 (HRVHH). 2 residues coordinate substrate: R167 and K168. The helical transmembrane segment at 199-219 (ITVVLMCFVVPTLVPWYIWGE) threads the bilayer. Residues 220–227 (SLWNSYFL) lie on the Lumenal side of the membrane. The chain crosses the membrane as a helical span at residues 228 to 247 (ASILRYTISLNVTWLVNSVA). Substrate is bound at residue W241. 4 residues coordinate Fe cation: H248, H277, H280, and H281. Topologically, residues 248 to 335 (HMYGNRPYDK…RKARTGDGSA (88 aa)) are cytoplasmic. The short motif at 277–281 (HNYHH) is the Histidine box-3 element.

It belongs to the fatty acid desaturase type 1 family. As to quaternary structure, may self-associate and form homodimers. Requires Fe(2+) as cofactor. Detected in brain.

Its subcellular location is the endoplasmic reticulum membrane. It catalyses the reaction octadecanoyl-CoA + 2 Fe(II)-[cytochrome b5] + O2 + 2 H(+) = (9Z)-octadecenoyl-CoA + 2 Fe(III)-[cytochrome b5] + 2 H2O. The catalysed reaction is hexadecanoyl-CoA + 2 Fe(II)-[cytochrome b5] + O2 + 2 H(+) = (9Z)-hexadecenoyl-CoA + 2 Fe(III)-[cytochrome b5] + 2 H2O. Functionally, stearoyl-CoA desaturase that utilizes O(2) and electrons from reduced cytochrome b5 to introduce the first double bond into saturated fatty acyl-CoA substrates. Catalyzes the insertion of a cis double bond at the delta-9 position into fatty acyl-CoA substrates including palmitoyl-CoA and stearoyl-CoA. Gives rise to a mixture of 16:1 and 18:1 unsaturated fatty acids. Involved in neuronal cell proliferation and differentiation through down-regulation of EGFR/AKT/MAPK and Wnt signaling pathways. In Bos taurus (Bovine), this protein is Stearoyl-CoA desaturase 5 (SCD5).